The following is a 128-amino-acid chain: D-ribose pyranase (128 aa).

The active-site Proton donor is the His-20. Substrate is bound by residues Asp-28, His-95, and 117 to 119 (YSN).

Belongs to the RbsD / FucU family. RbsD subfamily. In terms of assembly, homodecamer.

It localises to the cytoplasm. It catalyses the reaction beta-D-ribopyranose = beta-D-ribofuranose. Its pathway is carbohydrate metabolism; D-ribose degradation; D-ribose 5-phosphate from beta-D-ribopyranose: step 1/2. Catalyzes the interconversion of beta-pyran and beta-furan forms of D-ribose. The protein is D-ribose pyranase of Thermosipho africanus (strain TCF52B).